The chain runs to 353 residues: Photosystem II D2 protein (353 aa).

The residue at position 2 (Thr-2) is an N-acetylthreonine. Residue Thr-2 is modified to Phosphothreonine. A helical membrane pass occupies residues 41–61; the sequence is CAYFALGGWFTGTTFVTSWYT. His-118 is a binding site for chlorophyll a. Residues 125–141 form a helical membrane-spanning segment; that stretch reads GFMLRQFELARSVQLRP. Pheophytin a-binding residues include Gln-130 and Asn-143. Residues 153–166 traverse the membrane as a helical segment; sequence VFVSVFLIYPLGQS. His-198 is a binding site for chlorophyll a. A helical transmembrane segment spans residues 208–228; it reads AALLCAIHGATVENTLFEDGD. The a plastoquinone site is built by His-215 and Phe-262. Residue His-215 coordinates Fe cation. His-269 is a binding site for Fe cation. Residues 279–295 traverse the membrane as a helical segment; the sequence is GLWMSALGVVGLALNLR.

It belongs to the reaction center PufL/M/PsbA/D family. PSII is composed of 1 copy each of membrane proteins PsbA, PsbB, PsbC, PsbD, PsbE, PsbF, PsbH, PsbI, PsbJ, PsbK, PsbL, PsbM, PsbT, PsbX, PsbY, PsbZ, Psb30/Ycf12, at least 3 peripheral proteins of the oxygen-evolving complex and a large number of cofactors. It forms dimeric complexes. The D1/D2 heterodimer binds P680, chlorophylls that are the primary electron donor of PSII, and subsequent electron acceptors. It shares a non-heme iron and each subunit binds pheophytin, quinone, additional chlorophylls, carotenoids and lipids. There is also a Cl(-1) ion associated with D1 and D2, which is required for oxygen evolution. The PSII complex binds additional chlorophylls, carotenoids and specific lipids. serves as cofactor.

The protein localises to the plastid. It localises to the chloroplast thylakoid membrane. The catalysed reaction is 2 a plastoquinone + 4 hnu + 2 H2O = 2 a plastoquinol + O2. Photosystem II (PSII) is a light-driven water:plastoquinone oxidoreductase that uses light energy to abstract electrons from H(2)O, generating O(2) and a proton gradient subsequently used for ATP formation. It consists of a core antenna complex that captures photons, and an electron transfer chain that converts photonic excitation into a charge separation. The D1/D2 (PsbA/PsbD) reaction center heterodimer binds P680, the primary electron donor of PSII as well as several subsequent electron acceptors. D2 is needed for assembly of a stable PSII complex. This is Photosystem II D2 protein from Citrus sinensis (Sweet orange).